We begin with the raw amino-acid sequence, 571 residues long: Proline--tRNA ligase (571 aa).

The protein belongs to the class-II aminoacyl-tRNA synthetase family. ProS type 1 subfamily. In terms of assembly, homodimer.

The protein resides in the cytoplasm. The catalysed reaction is tRNA(Pro) + L-proline + ATP = L-prolyl-tRNA(Pro) + AMP + diphosphate. Functionally, catalyzes the attachment of proline to tRNA(Pro) in a two-step reaction: proline is first activated by ATP to form Pro-AMP and then transferred to the acceptor end of tRNA(Pro). As ProRS can inadvertently accommodate and process non-cognate amino acids such as alanine and cysteine, to avoid such errors it has two additional distinct editing activities against alanine. One activity is designated as 'pretransfer' editing and involves the tRNA(Pro)-independent hydrolysis of activated Ala-AMP. The other activity is designated 'posttransfer' editing and involves deacylation of mischarged Ala-tRNA(Pro). The misacylated Cys-tRNA(Pro) is not edited by ProRS. The sequence is that of Proline--tRNA ligase from Pediococcus pentosaceus (strain ATCC 25745 / CCUG 21536 / LMG 10740 / 183-1w).